The following is a 347-amino-acid chain: Nicotinate-nucleotide--dimethylbenzimidazole phosphoribosyltransferase (347 aa).

The active-site Proton acceptor is the E316.

This sequence belongs to the CobT family.

It catalyses the reaction 5,6-dimethylbenzimidazole + nicotinate beta-D-ribonucleotide = alpha-ribazole 5'-phosphate + nicotinate + H(+). The protein operates within nucleoside biosynthesis; alpha-ribazole biosynthesis; alpha-ribazole from 5,6-dimethylbenzimidazole: step 1/2. Functionally, catalyzes the synthesis of alpha-ribazole-5'-phosphate from nicotinate mononucleotide (NAMN) and 5,6-dimethylbenzimidazole (DMB). The polypeptide is Nicotinate-nucleotide--dimethylbenzimidazole phosphoribosyltransferase (Vibrio campbellii (strain ATCC BAA-1116)).